The primary structure comprises 201 residues: ATP-dependent Clp protease proteolytic subunit (201 aa).

Ser-103 acts as the Nucleophile in catalysis. His-128 is an active-site residue.

Belongs to the peptidase S14 family. As to quaternary structure, fourteen ClpP subunits assemble into 2 heptameric rings which stack back to back to give a disk-like structure with a central cavity, resembling the structure of eukaryotic proteasomes.

The protein localises to the cytoplasm. The enzyme catalyses Hydrolysis of proteins to small peptides in the presence of ATP and magnesium. alpha-casein is the usual test substrate. In the absence of ATP, only oligopeptides shorter than five residues are hydrolyzed (such as succinyl-Leu-Tyr-|-NHMec, and Leu-Tyr-Leu-|-Tyr-Trp, in which cleavage of the -Tyr-|-Leu- and -Tyr-|-Trp bonds also occurs).. In terms of biological role, cleaves peptides in various proteins in a process that requires ATP hydrolysis. Has a chymotrypsin-like activity. Plays a major role in the degradation of misfolded proteins. The sequence is that of ATP-dependent Clp protease proteolytic subunit from Bordetella avium (strain 197N).